Here is a 523-residue protein sequence, read N- to C-terminus: 2-isopropylmalate synthase (523 aa).

Residues 5–267 (VIIFDTTLRD…HTAINHQEIW (263 aa)) enclose the Pyruvate carboxyltransferase domain. 4 residues coordinate Mn(2+): D14, H202, H204, and N238. The segment at 392–523 (RLDYFSVQSG…QHNENNKETV (132 aa)) is regulatory domain.

The protein belongs to the alpha-IPM synthase/homocitrate synthase family. LeuA type 1 subfamily. Homodimer. It depends on Mn(2+) as a cofactor.

It is found in the cytoplasm. The enzyme catalyses 3-methyl-2-oxobutanoate + acetyl-CoA + H2O = (2S)-2-isopropylmalate + CoA + H(+). It functions in the pathway amino-acid biosynthesis; L-leucine biosynthesis; L-leucine from 3-methyl-2-oxobutanoate: step 1/4. Catalyzes the condensation of the acetyl group of acetyl-CoA with 3-methyl-2-oxobutanoate (2-ketoisovalerate) to form 3-carboxy-3-hydroxy-4-methylpentanoate (2-isopropylmalate). In Escherichia coli O157:H7, this protein is 2-isopropylmalate synthase.